A 39-amino-acid polypeptide reads, in one-letter code: Cytochrome b559 subunit beta (39 aa).

Residues 14-30 (WLAVHGLAVPTVFFLGS) traverse the membrane as a helical segment. Position 18 (histidine 18) interacts with heme.

The protein belongs to the PsbE/PsbF family. Heterodimer of an alpha subunit and a beta subunit. PSII is composed of 1 copy each of membrane proteins PsbA, PsbB, PsbC, PsbD, PsbE, PsbF, PsbH, PsbI, PsbJ, PsbK, PsbL, PsbM, PsbT, PsbX, PsbY, PsbZ, Psb30/Ycf12, at least 3 peripheral proteins of the oxygen-evolving complex and a large number of cofactors. It forms dimeric complexes. Heme b serves as cofactor.

It is found in the plastid. Its subcellular location is the chloroplast thylakoid membrane. Functionally, this b-type cytochrome is tightly associated with the reaction center of photosystem II (PSII). PSII is a light-driven water:plastoquinone oxidoreductase that uses light energy to abstract electrons from H(2)O, generating O(2) and a proton gradient subsequently used for ATP formation. It consists of a core antenna complex that captures photons, and an electron transfer chain that converts photonic excitation into a charge separation. The sequence is that of Cytochrome b559 subunit beta from Welwitschia mirabilis (Tree tumbo).